Here is a 182-residue protein sequence, read N- to C-terminus: DNA-directed RNA polymerase 30 kDa polypeptide (182 aa).

The segment at 135–175 (STIRCVACKSNNTIPMILQTRSSDEEPTVRVVCKDCGKNFA) adopts a TFIIS-type zinc-finger fold. Zn(2+) contacts are provided by cysteine 139, cysteine 142, cysteine 167, and cysteine 170.

The protein belongs to the poxviridae DNA-directed RNA polymerase 30 kDa subunit family. In terms of assembly, this enzyme consists of at least eight subunits.

It catalyses the reaction RNA(n) + a ribonucleoside 5'-triphosphate = RNA(n+1) + diphosphate. Functionally, DNA-dependent RNA polymerase catalyzes the transcription of DNA into RNA using the four ribonucleoside triphosphates as substrates. Rpo30 may have a role in RNA chain elongation. The sequence is that of DNA-directed RNA polymerase 30 kDa polypeptide (RPO30) from Fowlpox virus (strain NVSL) (FPV).